The chain runs to 893 residues: UPF0182 protein CLK_3152 (893 aa).

Helical transmembrane passes span 9 to 29 (IPLF…NFII), 49 to 69 (AIII…WMYY), 94 to 114 (LFFI…SSSY), 154 to 174 (VIIS…FILE), 202 to 222 (LAIV…IKIW), 246 to 266 (FYKI…LSIV), and 273 to 293 (VSIC…ASFL).

This sequence belongs to the UPF0182 family.

It is found in the cell membrane. This chain is UPF0182 protein CLK_3152, found in Clostridium botulinum (strain Loch Maree / Type A3).